Consider the following 518-residue polypeptide: Glutamate--cysteine ligase (518 aa).

Belongs to the glutamate--cysteine ligase type 1 family. Type 1 subfamily.

It catalyses the reaction L-cysteine + L-glutamate + ATP = gamma-L-glutamyl-L-cysteine + ADP + phosphate + H(+). It participates in sulfur metabolism; glutathione biosynthesis; glutathione from L-cysteine and L-glutamate: step 1/2. This Escherichia fergusonii (strain ATCC 35469 / DSM 13698 / CCUG 18766 / IAM 14443 / JCM 21226 / LMG 7866 / NBRC 102419 / NCTC 12128 / CDC 0568-73) protein is Glutamate--cysteine ligase.